The chain runs to 430 residues: Adenylosuccinate synthetase (430 aa).

GTP-binding positions include 12-18 and 40-42; these read GDEGKGK and GHT. The active-site Proton acceptor is the aspartate 13. The Mg(2+) site is built by aspartate 13 and glycine 40. IMP contacts are provided by residues 13–16, 38–41, threonine 128, arginine 142, glutamine 223, threonine 238, and arginine 302; these read DEGK and NAGH. The Proton donor role is filled by histidine 41. A substrate-binding site is contributed by 298 to 304; the sequence is VNTGRKR. GTP is bound by residues arginine 304, 330–332, and 412–414; these read KLD and GVG.

This sequence belongs to the adenylosuccinate synthetase family. Homodimer. Mg(2+) serves as cofactor.

It is found in the cytoplasm. The catalysed reaction is IMP + L-aspartate + GTP = N(6)-(1,2-dicarboxyethyl)-AMP + GDP + phosphate + 2 H(+). The protein operates within purine metabolism; AMP biosynthesis via de novo pathway; AMP from IMP: step 1/2. Its function is as follows. Plays an important role in the de novo pathway of purine nucleotide biosynthesis. Catalyzes the first committed step in the biosynthesis of AMP from IMP. The polypeptide is Adenylosuccinate synthetase (Corynebacterium aurimucosum (strain ATCC 700975 / DSM 44827 / CIP 107346 / CN-1) (Corynebacterium nigricans)).